The chain runs to 553 residues: CDP-diacylglycerol--glycerol-3-phosphate 3-phosphatidyltransferase, mitochondrial (553 aa).

Residues 1–25 (MAAPAAGPVFWRRLLGLLPGRPGLA) constitute a mitochondrion transit peptide. Ser46 carries the phosphoserine modification. 121–128 (ASLYLGTG) serves as a coordination point for ATP. 2 consecutive PLD phosphodiesterase domains span residues 212 to 238 (TIGLQHIKVYLFDNNVVLSGANLSDSY) and 457 to 490 (TGWTFHAKGLWLYLAGSSLPCLTLIGSPNFGYRS). Residues His217, Lys219, and Asp224 contribute to the active site.

This sequence belongs to the CDP-alcohol phosphatidyltransferase class-II family.

The protein resides in the mitochondrion. The enzyme catalyses a CDP-1,2-diacyl-sn-glycerol + sn-glycerol 3-phosphate = a 1,2-diacyl-sn-glycero-3-phospho-(1'-sn-glycero-3'-phosphate) + CMP + H(+). Its pathway is phospholipid metabolism; phosphatidylglycerol biosynthesis; phosphatidylglycerol from CDP-diacylglycerol: step 1/2. With respect to regulation, activated by calcium and magnesium and inhibited by other bivalent cations. Its function is as follows. Functions in the biosynthesis of the anionic phospholipids phosphatidylglycerol and cardiolipin. The protein is CDP-diacylglycerol--glycerol-3-phosphate 3-phosphatidyltransferase, mitochondrial (PGS1) of Cricetulus griseus (Chinese hamster).